A 253-amino-acid polypeptide reads, in one-letter code: Electron transfer flavoprotein subunit beta, mitochondrial (253 aa).

Belongs to the ETF beta-subunit/FixA family. In terms of assembly, heterodimer of an alpha and a beta subunit. FAD serves as cofactor. AMP is required as a cofactor.

Its subcellular location is the mitochondrion matrix. Functionally, the electron transfer flavoprotein serves as a specific electron acceptor for several dehydrogenases, including five acyl-CoA dehydrogenases, glutaryl-CoA and sarcosine dehydrogenase. It transfers the electrons to the main mitochondrial respiratory chain via ETF-ubiquinone oxidoreductase (ETF dehydrogenase). The protein is Electron transfer flavoprotein subunit beta, mitochondrial (ETFB) of Oryza sativa subsp. indica (Rice).